The sequence spans 248 residues: UPF0736 protein Bcer98_0893 (248 aa).

It belongs to the UPF0736 family.

In Bacillus cytotoxicus (strain DSM 22905 / CIP 110041 / 391-98 / NVH 391-98), this protein is UPF0736 protein Bcer98_0893.